A 732-amino-acid polypeptide reads, in one-letter code: Bromodomain-containing factor 1 (732 aa).

Residues Met-1–Asn-22 are compositionally biased toward polar residues. 5 disordered regions span residues Met-1–Glu-207, Thr-324–Pro-380, Asn-491–Val-517, Arg-556–Gln-600, and Val-700–Glu-732. The segment covering Ser-37 to Pro-51 has biased composition (low complexity). The span at Ala-89–Ser-100 shows a compositional bias: polar residues. Residues Glu-137–Val-147 are compositionally biased toward acidic residues. One can recognise a Bromo 1 domain in the interval Pro-206–Val-315. The span at Ala-327–Thr-338 shows a compositional bias: polar residues. Positions Lys-370 to Pro-380 are enriched in basic and acidic residues. Residues Lys-383–Lys-492 enclose the Bromo 2 domain. A coiled-coil region spans residues Ala-529 to Lys-569. The span at Ala-561–His-579 shows a compositional bias: basic residues. The span at Pro-590–Gln-600 shows a compositional bias: pro residues. The region spanning Pro-593 to Gly-672 is the NET domain. Positions Glu-718–Glu-732 are enriched in acidic residues.

This sequence belongs to the BET family.

It localises to the nucleus. Its function is as follows. Transcription factor involved in the expression of a broad class of genes including snRNAs. Required for sporulation and DNA-damage repair. Prevents the spreading of SIR silencing at telomeres and protects histone H4, but not H3, from deacetylation. The protein is Bromodomain-containing factor 1 (BDF1) of Candida albicans (strain SC5314 / ATCC MYA-2876) (Yeast).